The following is a 326-amino-acid chain: Isopenicillin N synthase (326 aa).

Residues Arg84, Tyr88, and Tyr186 each contribute to the isopenicillin N site. Positions 84, 88, 186, 209, and 211 each coordinate N-[(5S)-5-amino-5-carboxypentanoyl]-L-cysteinyl-D-valine. Positions 183-283 (LIRYPFLENY…RLSIPFFANL (101 aa)) constitute a Fe2OG dioxygenase domain. The Fe(2+) site is built by His209, Asp211, and His265. 2-oxoglutarate is bound at residue Arg274. Ser276 provides a ligand contact to isopenicillin N. N-[(5S)-5-amino-5-carboxypentanoyl]-L-cysteinyl-D-valine is bound at residue Ser276.

The protein belongs to the iron/ascorbate-dependent oxidoreductase family. It depends on Fe cation as a cofactor. The cofactor is L-ascorbate.

The catalysed reaction is N-[(5S)-5-amino-5-carboxypentanoyl]-L-cysteinyl-D-valine + O2 = isopenicillin N + 2 H2O. Its pathway is antibiotic biosynthesis; penicillin G biosynthesis; penicillin G from L-alpha-aminoadipate and L-cysteine and L-valine: step 2/3. In terms of biological role, removes, in the presence of oxygen, 4 hydrogen atoms from delta-L-(alpha-aminoadipyl)-L-cysteinyl-D-valine (ACV) to form the azetidinone and thiazolidine rings of isopenicillin. In Flavobacterium sp. (strain SC 12,154), this protein is Isopenicillin N synthase (pcbC).